The sequence spans 122 residues: Large ribosomal subunit protein uL14 (122 aa).

The protein belongs to the universal ribosomal protein uL14 family. Part of the 50S ribosomal subunit. Forms a cluster with proteins L3 and L19. In the 70S ribosome, L14 and L19 interact and together make contacts with the 16S rRNA in bridges B5 and B8.

Binds to 23S rRNA. Forms part of two intersubunit bridges in the 70S ribosome. The chain is Large ribosomal subunit protein uL14 from Rhizobium johnstonii (strain DSM 114642 / LMG 32736 / 3841) (Rhizobium leguminosarum bv. viciae).